We begin with the raw amino-acid sequence, 545 residues long: CWF19-like protein 1 homolog (545 aa).

A disordered region spans residues 306 to 329 (YFYDMDGGRRKRQGGDNNKRDKRP).

Belongs to the CWF19 family.

In Drosophila melanogaster (Fruit fly), this protein is CWF19-like protein 1 homolog.